Reading from the N-terminus, the 324-residue chain is Lipoyl synthase (324 aa).

[4Fe-4S] cluster contacts are provided by cysteine 65, cysteine 70, cysteine 76, cysteine 91, cysteine 95, cysteine 98, and serine 302. Residues 77 to 291 (WEDREATFLI…AQYAEGLGFA (215 aa)) enclose the Radical SAM core domain.

The protein belongs to the radical SAM superfamily. Lipoyl synthase family. It depends on [4Fe-4S] cluster as a cofactor.

It is found in the cytoplasm. It catalyses the reaction [[Fe-S] cluster scaffold protein carrying a second [4Fe-4S](2+) cluster] + N(6)-octanoyl-L-lysyl-[protein] + 2 oxidized [2Fe-2S]-[ferredoxin] + 2 S-adenosyl-L-methionine + 4 H(+) = [[Fe-S] cluster scaffold protein] + N(6)-[(R)-dihydrolipoyl]-L-lysyl-[protein] + 4 Fe(3+) + 2 hydrogen sulfide + 2 5'-deoxyadenosine + 2 L-methionine + 2 reduced [2Fe-2S]-[ferredoxin]. It participates in protein modification; protein lipoylation via endogenous pathway; protein N(6)-(lipoyl)lysine from octanoyl-[acyl-carrier-protein]: step 2/2. In terms of biological role, catalyzes the radical-mediated insertion of two sulfur atoms into the C-6 and C-8 positions of the octanoyl moiety bound to the lipoyl domains of lipoate-dependent enzymes, thereby converting the octanoylated domains into lipoylated derivatives. The sequence is that of Lipoyl synthase from Mycobacterium ulcerans (strain Agy99).